Reading from the N-terminus, the 119-residue chain is Dihydroneopterin aldolase (119 aa).

Substrate contacts are provided by residues Glu21, Tyr53, and 72 to 73 (IE). Catalysis depends on Lys99, which acts as the Proton donor/acceptor.

Belongs to the DHNA family.

The catalysed reaction is 7,8-dihydroneopterin = 6-hydroxymethyl-7,8-dihydropterin + glycolaldehyde. The protein operates within cofactor biosynthesis; tetrahydrofolate biosynthesis; 2-amino-4-hydroxy-6-hydroxymethyl-7,8-dihydropteridine diphosphate from 7,8-dihydroneopterin triphosphate: step 3/4. Functionally, catalyzes the conversion of 7,8-dihydroneopterin to 6-hydroxymethyl-7,8-dihydropterin. The chain is Dihydroneopterin aldolase (folB) from Streptococcus pyogenes serotype M3 (strain ATCC BAA-595 / MGAS315).